The primary structure comprises 223 residues: Cutinase (223 aa).

The N-terminal stretch at 1–19 is a signal peptide; the sequence is MKFFAFSMLIGEASPIVLA. C46 and C124 are disulfide-bonded. S135 (nucleophile) is an active-site residue. Cysteines 185 and 192 form a disulfide. Residue D189 is part of the active site. H202 (proton donor/acceptor) is an active-site residue.

The protein belongs to the cutinase family. In terms of processing, the 2 disulfide bonds play a critical role in holding the catalytic residues in juxta-position; reduction of the disulfide bridges results in the complete inactivation of the enzyme.

It localises to the secreted. It catalyses the reaction cutin + H2O = cutin monomers.. Catalyzes the hydrolysis of complex carboxylic polyesters found in the cell wall of plants. Degrades cutin, a macromolecule that forms the structure of the plant cuticle. Allows pathogenic fungi to penetrate through the cuticular barrier into the host plant during the initial stage of fungal infection. The protein is Cutinase (CUT) of Didymella rabiei (Chickpea ascochyta blight fungus).